The sequence spans 157 residues: Protein Smg homolog (157 aa).

This sequence belongs to the Smg family.

This chain is Protein Smg homolog, found in Aliivibrio fischeri (strain ATCC 700601 / ES114) (Vibrio fischeri).